We begin with the raw amino-acid sequence, 100 residues long: Small ribosomal subunit protein uS14c (100 aa).

It belongs to the universal ribosomal protein uS14 family. In terms of assembly, part of the 30S ribosomal subunit.

Its subcellular location is the plastid. The protein localises to the chloroplast. Its function is as follows. Binds 16S rRNA, required for the assembly of 30S particles. The protein is Small ribosomal subunit protein uS14c of Carica papaya (Papaya).